The sequence spans 40 residues: Natriuretic peptide PtNP-a (40 aa).

Cysteine 9 and cysteine 25 are oxidised to a cystine. Positions 17–34 (ISNTSGMGCRNPIQNRPK) are enriched in polar residues. The segment at 17 to 40 (ISNTSGMGCRNPIQNRPKSTPGGS) is disordered.

It belongs to the natriuretic peptide family. As to expression, expressed by the venom gland.

The protein resides in the secreted. Its function is as follows. Snake venom natriuretic peptide that targets NPR1 and possibly NPR2. Exhibits hypotensive and vasodepressor activities. Recombinant PtNP-a demonstrates a dose-dependent stimulation of cGMP production via the natriuretic peptide receptor 1 (NPR1) (EC(50)=563 nM) in Madine Darby Canine Kidney (MDCK) cells. It also inhibits the angiotensin converting enzyme (ACE). The chain is Natriuretic peptide PtNP-a from Pseudonaja textilis (Eastern brown snake).